Reading from the N-terminus, the 101-residue chain is NADH-quinone oxidoreductase subunit K (101 aa).

The next 3 membrane-spanning stretches (helical) occupy residues 4 to 24 (LSHY…GIFL), 30 to 50 (IILL…FVAF), and 61 to 81 (IFVF…LAIL).

It belongs to the complex I subunit 4L family. As to quaternary structure, NDH-1 is composed of 14 different subunits. Subunits NuoA, H, J, K, L, M, N constitute the membrane sector of the complex.

It is found in the cell inner membrane. It carries out the reaction a quinone + NADH + 5 H(+)(in) = a quinol + NAD(+) + 4 H(+)(out). NDH-1 shuttles electrons from NADH, via FMN and iron-sulfur (Fe-S) centers, to quinones in the respiratory chain. The immediate electron acceptor for the enzyme in this species is believed to be ubiquinone. Couples the redox reaction to proton translocation (for every two electrons transferred, four hydrogen ions are translocated across the cytoplasmic membrane), and thus conserves the redox energy in a proton gradient. In Nitrosomonas eutropha (strain DSM 101675 / C91 / Nm57), this protein is NADH-quinone oxidoreductase subunit K.